The sequence spans 570 residues: Putative ABC transporter ATP-binding protein MW2603 (570 aa).

ABC transporter domains lie at 6–247 (ISFK…GIRE) and 304–537 (LELN…ASLR). ATP is bound by residues 40–47 (GASGSGKS) and 338–345 (GHNGAGKS).

It belongs to the ABC transporter superfamily.

It is found in the cell membrane. Functionally, probably part of an ABC transporter complex. Responsible for energy coupling to the transport system. This Staphylococcus aureus (strain MW2) protein is Putative ABC transporter ATP-binding protein MW2603.